Consider the following 343-residue polypeptide: Cytoplasmic tRNA 2-thiolation protein 1 (343 aa).

The protein belongs to the TtcA family. CTU1/NCS6/ATPBD3 subfamily.

The protein resides in the cytoplasm. It participates in tRNA modification; 5-methoxycarbonylmethyl-2-thiouridine-tRNA biosynthesis. In terms of biological role, plays a central role in 2-thiolation of mcm(5)S(2)U at tRNA wobble positions of tRNA(Lys), tRNA(Glu) and tRNA(Gln). Directly binds tRNAs and probably acts by catalyzing adenylation of tRNAs, an intermediate required for 2-thiolation. It is unclear whether it acts as a sulfurtransferase that transfers sulfur from thiocarboxylated URM1 onto the uridine of tRNAs at wobble position. The sequence is that of Cytoplasmic tRNA 2-thiolation protein 1 from Drosophila ananassae (Fruit fly).